An 89-amino-acid chain; its full sequence is Small ribosomal subunit protein uS15 (89 aa).

Belongs to the universal ribosomal protein uS15 family. In terms of assembly, part of the 30S ribosomal subunit. Forms a bridge to the 50S subunit in the 70S ribosome, contacting the 23S rRNA.

One of the primary rRNA binding proteins, it binds directly to 16S rRNA where it helps nucleate assembly of the platform of the 30S subunit by binding and bridging several RNA helices of the 16S rRNA. Its function is as follows. Forms an intersubunit bridge (bridge B4) with the 23S rRNA of the 50S subunit in the ribosome. The protein is Small ribosomal subunit protein uS15 of Xanthobacter autotrophicus (strain ATCC BAA-1158 / Py2).